Here is a 418-residue protein sequence, read N- to C-terminus: Serine hydroxymethyltransferase (418 aa).

Residues Leu121 and 125–127 (GHL) contribute to the (6S)-5,6,7,8-tetrahydrofolate site. Lys230 is subject to N6-(pyridoxal phosphate)lysine. 356–358 (SPF) is a binding site for (6S)-5,6,7,8-tetrahydrofolate.

The protein belongs to the SHMT family. Homodimer. Pyridoxal 5'-phosphate serves as cofactor.

The protein resides in the cytoplasm. The catalysed reaction is (6R)-5,10-methylene-5,6,7,8-tetrahydrofolate + glycine + H2O = (6S)-5,6,7,8-tetrahydrofolate + L-serine. Its pathway is one-carbon metabolism; tetrahydrofolate interconversion. It functions in the pathway amino-acid biosynthesis; glycine biosynthesis; glycine from L-serine: step 1/1. In terms of biological role, catalyzes the reversible interconversion of serine and glycine with tetrahydrofolate (THF) serving as the one-carbon carrier. This reaction serves as the major source of one-carbon groups required for the biosynthesis of purines, thymidylate, methionine, and other important biomolecules. Also exhibits THF-independent aldolase activity toward beta-hydroxyamino acids, producing glycine and aldehydes, via a retro-aldol mechanism. The polypeptide is Serine hydroxymethyltransferase (Idiomarina loihiensis (strain ATCC BAA-735 / DSM 15497 / L2-TR)).